Here is a 492-residue protein sequence, read N- to C-terminus: WD repeat-containing protein JIP5 (492 aa).

5 WD repeats span residues 127–166 (RHKG…VVKK), 178–217 (KKND…LSNS), 236–274 (RSAY…ILIS), 276–317 (DQED…LEDQ), and 365–405 (RNHS…VEEN). Acidic residues-rich tracts occupy residues 404 to 414 (ENASVESDSDE) and 422 to 433 (DLSDDTSSDDET). The interval 404-472 (ENASVESDSD…SKSVKKRKIM (69 aa)) is disordered. The segment covering 449-462 (KDLKEDHQEEKESN) has biased composition (basic and acidic residues).

As to quaternary structure, interacts with BUD27 and GIS1.

The protein localises to the nucleus. It is found in the nucleolus. The sequence is that of WD repeat-containing protein JIP5 (JIP5) from Saccharomyces cerevisiae (strain ATCC 204508 / S288c) (Baker's yeast).